Consider the following 138-residue polypeptide: Translation initiation factor 2 subunit beta (138 aa).

The protein belongs to the eIF-2-beta/eIF-5 family. In terms of assembly, heterotrimer composed of an alpha, a beta and a gamma chain.

Functionally, eIF-2 functions in the early steps of protein synthesis by forming a ternary complex with GTP and initiator tRNA. This chain is Translation initiation factor 2 subunit beta, found in Methanococcus maripaludis (strain DSM 14266 / JCM 13030 / NBRC 101832 / S2 / LL).